Reading from the N-terminus, the 422-residue chain is Gamma-glutamyl phosphate reductase (422 aa).

This sequence belongs to the gamma-glutamyl phosphate reductase family.

Its subcellular location is the cytoplasm. The enzyme catalyses L-glutamate 5-semialdehyde + phosphate + NADP(+) = L-glutamyl 5-phosphate + NADPH + H(+). It functions in the pathway amino-acid biosynthesis; L-proline biosynthesis; L-glutamate 5-semialdehyde from L-glutamate: step 2/2. In terms of biological role, catalyzes the NADPH-dependent reduction of L-glutamate 5-phosphate into L-glutamate 5-semialdehyde and phosphate. The product spontaneously undergoes cyclization to form 1-pyrroline-5-carboxylate. This Nitrosomonas eutropha (strain DSM 101675 / C91 / Nm57) protein is Gamma-glutamyl phosphate reductase.